Reading from the N-terminus, the 135-residue chain is Protein PsiE homolog (135 aa).

Helical transmembrane passes span 20-40 (VGLLLLAAILIVFLVKETIHL), 54-74 (YLLIEGIVIYFLYFEFIALIV), 82-102 (HFPLRYFIYIGITAIIRLIIV), and 107-127 (PIDTLIYSAAILLLVVTLYLA).

It belongs to the PsiE family.

It is found in the cell inner membrane. This is Protein PsiE homolog from Serratia proteamaculans (strain 568).